The chain runs to 227 residues: Putative N-acetylmannosamine-6-phosphate 2-epimerase (227 aa).

The protein belongs to the NanE family.

The catalysed reaction is an N-acyl-D-glucosamine 6-phosphate = an N-acyl-D-mannosamine 6-phosphate. It functions in the pathway amino-sugar metabolism; N-acetylneuraminate degradation; D-fructose 6-phosphate from N-acetylneuraminate: step 3/5. Converts N-acetylmannosamine-6-phosphate (ManNAc-6-P) to N-acetylglucosamine-6-phosphate (GlcNAc-6-P). This Shouchella clausii (strain KSM-K16) (Alkalihalobacillus clausii) protein is Putative N-acetylmannosamine-6-phosphate 2-epimerase.